A 55-amino-acid polypeptide reads, in one-letter code: Mitochondrial import receptor subunit TOM7 homolog (55 aa).

Topologically, residues 1-20 (MVKLSKEAKQRLQQLFKGGQ) are cytoplasmic. The chain crosses the membrane as a helical span at residues 21-36 (FAIRWGFIPLVIYLGF). The Mitochondrial intermembrane portion of the chain corresponds to 37–55 (KRGADPGMPEPTVLSLLWG).

It belongs to the Tom7 family. As to quaternary structure, forms part of the preprotein translocase complex of the outer mitochondrial membrane (TOM complex) which consists of at least 7 different proteins (TOMM5, TOMM6, TOMM7, TOMM20, TOMM22, TOMM40 and TOMM70).

The protein localises to the mitochondrion outer membrane. In terms of biological role, required for assembly and stability of the TOM complex. Positive regulator of PRKN translocation to damaged mitochondria. Acts probably by stabilizing PINK1 on the outer membrane of depolarized mitochondria. This chain is Mitochondrial import receptor subunit TOM7 homolog (TOMM7), found in Bos taurus (Bovine).